The sequence spans 403 residues: Phosphopentomutase (403 aa).

The Mn(2+) site is built by aspartate 13, aspartate 298, histidine 303, aspartate 339, histidine 340, and histidine 351.

Belongs to the phosphopentomutase family. Mn(2+) serves as cofactor.

The protein localises to the cytoplasm. The enzyme catalyses 2-deoxy-alpha-D-ribose 1-phosphate = 2-deoxy-D-ribose 5-phosphate. The catalysed reaction is alpha-D-ribose 1-phosphate = D-ribose 5-phosphate. It participates in carbohydrate degradation; 2-deoxy-D-ribose 1-phosphate degradation; D-glyceraldehyde 3-phosphate and acetaldehyde from 2-deoxy-alpha-D-ribose 1-phosphate: step 1/2. Its function is as follows. Isomerase that catalyzes the conversion of deoxy-ribose 1-phosphate (dRib-1-P) and ribose 1-phosphate (Rib-1-P) to deoxy-ribose 5-phosphate (dRib-5-P) and ribose 5-phosphate (Rib-5-P), respectively. In Streptococcus pyogenes serotype M2 (strain MGAS10270), this protein is Phosphopentomutase.